The primary structure comprises 485 residues: E3 ubiquitin-protein ligase RNF8 (485 aa).

The 55-residue stretch at 38–92 folds into the FHA domain; sequence VTVGRGFGVTYQLVSKICPLMISRNHCVLKQNPEGQWTIMDNKSLNGVWLNRARL. The interval 68-72 is required for interaction with PIWIL1; that stretch reads QNPEG. Residue serine 157 is modified to Phosphoserine. The tract at residues 181 to 220 is disordered; that stretch reads CESGQPVKSQGKGEVASTPSDNLDPKLTALEPSKTTGAPI. The segment at 403–441 adopts an RING-type zinc-finger fold; the sequence is CIICSEYFIEAVTLNCAHSFCSYCINEWMKRKIECPICR.

This sequence belongs to the RNF8 family. As to quaternary structure, homodimer. Forms a E2-E3 ubiquitin ligase complex composed of the RNF8 homodimer and a E2 heterodimer of UBE2N and UBE2V2. Interacts with class III E2s, including UBE2E1, UBE2E2, and UBE2E3 and with UBE2N. Interacts with RXRA. Interacts (via FHA domain) with ATM-phosphorylated MDC1. Interacts (via FHA domain) with 'Thr-4827' phosphorylated HERC2 (via C-terminus). Interacts with PIWIL1; leading to sequester RNF8 in the cytoplasm. Interacts with WRAP53/TCAB1. (Microbial infection) Interacts (via FHA domain) with phosphorylated human herpesvirus 1 ICP0 protein; leading to RNF8 degradation by the proteasome. Autoubiquitinated through 'Lys-48' and 'Lys-63' of ubiquitin. 'Lys-63' polyubiquitination is mediated by UBE2N. 'Lys-29'-type polyubiquitination is also observed, but it doesn't require its own functional RING-type zinc finger. In terms of tissue distribution, ubiquitous. In fetal tissues, highest expression in brain, thymus and liver. In adult tissues, highest levels in brain and testis, lowest levels in peripheral blood cells.

It is found in the nucleus. It localises to the cytoplasm. Its subcellular location is the midbody. The protein localises to the chromosome. The protein resides in the telomere. The enzyme catalyses S-ubiquitinyl-[E2 ubiquitin-conjugating enzyme]-L-cysteine + [acceptor protein]-L-lysine = [E2 ubiquitin-conjugating enzyme]-L-cysteine + N(6)-ubiquitinyl-[acceptor protein]-L-lysine.. It participates in protein modification; protein ubiquitination. Its function is as follows. E3 ubiquitin-protein ligase that plays a key role in DNA damage signaling via 2 distinct roles: by mediating the 'Lys-63'-linked ubiquitination of histones H2A and H2AX and promoting the recruitment of DNA repair proteins at double-strand breaks (DSBs) sites, and by catalyzing 'Lys-48'-linked ubiquitination to remove target proteins from DNA damage sites. Following DNA DSBs, it is recruited to the sites of damage by ATM-phosphorylated MDC1 and catalyzes the 'Lys-63'-linked ubiquitination of histones H2A and H2AX, thereby promoting the formation of TP53BP1 and BRCA1 ionizing radiation-induced foci (IRIF). Also controls the recruitment of UIMC1-BRCC3 (RAP80-BRCC36) and PAXIP1/PTIP to DNA damage sites. Promotes the recruitment of NBN to DNA damage sites by catalyzing 'Lys-6'-linked ubiquitination of NBN. Also recruited at DNA interstrand cross-links (ICLs) sites and catalyzes 'Lys-63'-linked ubiquitination of histones H2A and H2AX, leading to recruitment of FAAP20/C1orf86 and Fanconi anemia (FA) complex, followed by interstrand cross-link repair. H2A ubiquitination also mediates the ATM-dependent transcriptional silencing at regions flanking DSBs in cis, a mechanism to avoid collision between transcription and repair intermediates. Promotes the formation of 'Lys-63'-linked polyubiquitin chains via interactions with the specific ubiquitin-conjugating UBE2N/UBC13 and ubiquitinates non-histone substrates such as PCNA. Substrates that are polyubiquitinated at 'Lys-63' are usually not targeted for degradation. Also catalyzes the formation of 'Lys-48'-linked polyubiquitin chains via interaction with the ubiquitin-conjugating UBE2L6/UBCH8, leading to degradation of substrate proteins such as CHEK2, JMJD2A/KDM4A and KU80/XRCC5: it is still unclear how the preference toward 'Lys-48'- versus 'Lys-63'-linked ubiquitination is regulated but it could be due to RNF8 ability to interact with specific E2 specific ligases. For instance, interaction with phosphorylated HERC2 promotes the association between RNF8 and UBE2N/UBC13 and favors the specific formation of 'Lys-63'-linked ubiquitin chains. Promotes non-homologous end joining (NHEJ) by promoting the 'Lys-48'-linked ubiquitination and degradation the of KU80/XRCC5. Following DNA damage, mediates the ubiquitination and degradation of JMJD2A/KDM4A in collaboration with RNF168, leading to unmask H4K20me2 mark and promote the recruitment of TP53BP1 at DNA damage sites. Following DNA damage, mediates the ubiquitination and degradation of POLD4/p12, a subunit of DNA polymerase delta. In the absence of POLD4, DNA polymerase delta complex exhibits higher proofreading activity. In addition to its function in damage signaling, also plays a role in higher-order chromatin structure by mediating extensive chromatin decondensation. Involved in the activation of ATM by promoting histone H2B ubiquitination, which indirectly triggers histone H4 'Lys-16' acetylation (H4K16ac), establishing a chromatin environment that promotes efficient activation of ATM kinase. Required in the testis, where it plays a role in the replacement of histones during spermatogenesis. At uncapped telomeres, promotes the joining of deprotected chromosome ends by inducing H2A ubiquitination and TP53BP1 recruitment, suggesting that it may enhance cancer development by aggravating telomere-induced genome instability in case of telomeric crisis. Promotes the assembly of RAD51 at DNA DSBs in the absence of BRCA1 and TP53BP1 Also involved in class switch recombination in immune system, via its role in regulation of DSBs repair. May be required for proper exit from mitosis after spindle checkpoint activation and may regulate cytokinesis. May play a role in the regulation of RXRA-mediated transcriptional activity. Not involved in RXRA ubiquitination by UBE2E2. In Homo sapiens (Human), this protein is E3 ubiquitin-protein ligase RNF8.